Consider the following 365-residue polypeptide: uncharacterized protein (365 aa).

At 1-133 (MVLAKQWVLK…RKLDKNKVGK (133 aa)) the chain is on the cytoplasmic side. Residues 134–154 (LWWYLSVLGGTSLTAYFIFFT) traverse the membrane as a helical segment. At 155-169 (YAQLQEREEDYGKVY) the chain is on the extracellular side. The helical transmembrane segment at 170–190 (LISGAAGAVGTVCIQLALNVF) threads the bilayer. Residues 191-365 (KASKVIAIAG…KLITKVNNEE (175 aa)) are Cytoplasmic-facing.

The protein resides in the membrane. This is an uncharacterized protein from Saccharomyces cerevisiae (strain ATCC 204508 / S288c) (Baker's yeast).